A 343-amino-acid polypeptide reads, in one-letter code: Mitochondrial import inner membrane translocase subunit TIM50-A (343 aa).

Over 1 to 57 (MHKIVWFGTLNKSIGYIGKKKTCLLSPCEKICLNSARKTVQRCDKNYSPPKLRRIKN) the chain is Mitochondrial matrix. A helical transmembrane segment spans residues 58–77 (FYTYSVVLGSLFSIVMWAIY). The Mitochondrial intermembrane portion of the chain corresponds to 78 to 343 (KLGKPEEDHR…GRSLRGSSIK (266 aa)). In terms of domain architecture, FCP1 homology spans 135–278 (YIQPPYSLVL…FDLTAFLQLI (144 aa)).

It belongs to the TIM50 family. In terms of assembly, component of the TIM23 complex at least composed of Tim23, Tim17 (Tim17a1, Tim17a2 or Tim17b1) and a Tim50. Exclusively expressed in the testis.

It is found in the mitochondrion inner membrane. In terms of biological role, essential component of the TIM23 complex, a complex that mediates the translocation of transit peptide-containing proteins across the mitochondrial inner membrane. This is Mitochondrial import inner membrane translocase subunit TIM50-A (ttm3) from Drosophila melanogaster (Fruit fly).